The sequence spans 225 residues: Urease accessory protein UreG 2 (225 aa).

31 to 38 (GPVGSGKT) contacts GTP.

This sequence belongs to the SIMIBI class G3E GTPase family. UreG subfamily. As to quaternary structure, homodimer. UreD, UreF and UreG form a complex that acts as a GTP-hydrolysis-dependent molecular chaperone, activating the urease apoprotein by helping to assemble the nickel containing metallocenter of UreC. The UreE protein probably delivers the nickel.

The protein localises to the cytoplasm. Its function is as follows. Facilitates the functional incorporation of the urease nickel metallocenter. This process requires GTP hydrolysis, probably effectuated by UreG. The protein is Urease accessory protein UreG 2 of Streptomyces griseus subsp. griseus (strain JCM 4626 / CBS 651.72 / NBRC 13350 / KCC S-0626 / ISP 5235).